The chain runs to 504 residues: ATP synthase subunit alpha (504 aa).

An ATP-binding site is contributed by 169–176 (GDRQTGKT).

The protein belongs to the ATPase alpha/beta chains family. In terms of assembly, F-type ATPases have 2 components, CF(1) - the catalytic core - and CF(0) - the membrane proton channel. CF(1) has five subunits: alpha(3), beta(3), gamma(1), delta(1), epsilon(1). CF(0) has three main subunits: a(1), b(2) and c(9-12). The alpha and beta chains form an alternating ring which encloses part of the gamma chain. CF(1) is attached to CF(0) by a central stalk formed by the gamma and epsilon chains, while a peripheral stalk is formed by the delta and b chains.

Its subcellular location is the cell membrane. The catalysed reaction is ATP + H2O + 4 H(+)(in) = ADP + phosphate + 5 H(+)(out). In terms of biological role, produces ATP from ADP in the presence of a proton gradient across the membrane. The alpha chain is a regulatory subunit. The chain is ATP synthase subunit alpha from Clostridium botulinum (strain ATCC 19397 / Type A).